The primary structure comprises 69 residues: uncharacterized protein (69 aa).

This is an uncharacterized protein from Vaccinia virus (strain Copenhagen) (VACV).